We begin with the raw amino-acid sequence, 346 residues long: 4-amino-5-hydroxymethyl-2-methylpyrimidine phosphate synthase (346 aa).

Position 62 is an N6-(pyridoxal phosphate)lysine (lysine 62). The active site involves histidine 66. 114–117 (GEFG) contributes to the pyridoxal 5'-phosphate binding site. The CCCFC; essential for catalytic activity, may be the site of iron coordination motif lies at 194-198 (CCCFC).

This sequence belongs to the NMT1/THI5 family. In terms of assembly, homodimer. Fe cation is required as a cofactor.

Its subcellular location is the cytoplasm. The protein resides in the nucleus. It catalyses the reaction N(6)-(pyridoxal phosphate)-L-lysyl-[4-amino-5-hydroxymethyl-2-methylpyrimidine phosphate synthase] + L-histidyl-[4-amino-5-hydroxymethyl-2-methylpyrimidine phosphate synthase] + 2 Fe(3+) + 4 H2O = L-lysyl-[4-amino-5-hydroxymethyl-2-methylpyrimidine phosphate synthase] + (2S)-2-amino-5-hydroxy-4-oxopentanoyl-[4-amino-5-hydroxymethyl-2-methylpyrimidine phosphate synthase] + 4-amino-2-methyl-5-(phosphooxymethyl)pyrimidine + 3-oxopropanoate + 2 Fe(2+) + 2 H(+). It functions in the pathway cofactor biosynthesis; thiamine diphosphate biosynthesis. Its function is as follows. Responsible for the formation of the pyrimidine heterocycle in the thiamine biosynthesis pathway. Catalyzes the formation of hydroxymethylpyrimidine phosphate (HMP-P) from histidine and pyridoxal phosphate (PLP). The protein uses PLP and the active site histidine to form HMP-P, generating an inactive enzyme. The enzyme can only undergo a single turnover, which suggests it is a suicide enzyme. This chain is 4-amino-5-hydroxymethyl-2-methylpyrimidine phosphate synthase, found in Schizosaccharomyces pombe (strain 972 / ATCC 24843) (Fission yeast).